We begin with the raw amino-acid sequence, 353 residues long: UPF0283 membrane protein YcjF (353 aa).

Basic and acidic residues predominate over residues 1–19; the sequence is MSEPLKPRIDFAEPLKEEP. Positions 1–35 are disordered; that stretch reads MSEPLKPRIDFAEPLKEEPTSAFKAQQTFSEAESR. 3 consecutive transmembrane segments (helical) span residues 70 to 90, 100 to 120, and 213 to 233; these read MVMG…LQWT, VALG…GSVV, and ESTL…FIAW.

The protein belongs to the UPF0283 family.

The protein resides in the cell inner membrane. This is UPF0283 membrane protein YcjF from Salmonella choleraesuis (strain SC-B67).